The chain runs to 278 residues: 4-hydroxy-3-methylbut-2-enyl diphosphate reductase (278 aa).

Residue C12 coordinates [4Fe-4S] cluster. The (2E)-4-hydroxy-3-methylbut-2-enyl diphosphate site is built by H41 and H74. Dimethylallyl diphosphate contacts are provided by H41 and H74. Isopentenyl diphosphate is bound by residues H41 and H74. Position 96 (C96) interacts with [4Fe-4S] cluster. H124 is a (2E)-4-hydroxy-3-methylbut-2-enyl diphosphate binding site. Position 124 (H124) interacts with dimethylallyl diphosphate. H124 is an isopentenyl diphosphate binding site. The Proton donor role is filled by E126. T161 serves as a coordination point for (2E)-4-hydroxy-3-methylbut-2-enyl diphosphate. C189 is a [4Fe-4S] cluster binding site. Residues S217, N219, and S261 each coordinate (2E)-4-hydroxy-3-methylbut-2-enyl diphosphate. Positions 217, 219, and 261 each coordinate dimethylallyl diphosphate. S217, N219, and S261 together coordinate isopentenyl diphosphate.

It belongs to the IspH family. [4Fe-4S] cluster is required as a cofactor.

It catalyses the reaction isopentenyl diphosphate + 2 oxidized [2Fe-2S]-[ferredoxin] + H2O = (2E)-4-hydroxy-3-methylbut-2-enyl diphosphate + 2 reduced [2Fe-2S]-[ferredoxin] + 2 H(+). The catalysed reaction is dimethylallyl diphosphate + 2 oxidized [2Fe-2S]-[ferredoxin] + H2O = (2E)-4-hydroxy-3-methylbut-2-enyl diphosphate + 2 reduced [2Fe-2S]-[ferredoxin] + 2 H(+). Its pathway is isoprenoid biosynthesis; dimethylallyl diphosphate biosynthesis; dimethylallyl diphosphate from (2E)-4-hydroxy-3-methylbutenyl diphosphate: step 1/1. It functions in the pathway isoprenoid biosynthesis; isopentenyl diphosphate biosynthesis via DXP pathway; isopentenyl diphosphate from 1-deoxy-D-xylulose 5-phosphate: step 6/6. Catalyzes the conversion of 1-hydroxy-2-methyl-2-(E)-butenyl 4-diphosphate (HMBPP) into a mixture of isopentenyl diphosphate (IPP) and dimethylallyl diphosphate (DMAPP). Acts in the terminal step of the DOXP/MEP pathway for isoprenoid precursor biosynthesis. In Anaeromyxobacter sp. (strain K), this protein is 4-hydroxy-3-methylbut-2-enyl diphosphate reductase.